Here is an 84-residue protein sequence, read N- to C-terminus: Control protein C.SmaI (84 aa).

Residues 19–73 (VRSYRNINNLSQEQLAEISGLHRTYIGSVERKERNVTLSTLIILAKALNTSVPKL) form the HTH cro/C1-type domain. The segment at residues 30-49 (QEQLAEISGLHRTYIGSVER) is a DNA-binding region (H-T-H motif).

May control expression of its associated restriction-modification system SmaI. This is Control protein C.SmaI from Serratia marcescens.